The sequence spans 431 residues: Enolase (431 aa).

Glutamine 167 is a binding site for (2R)-2-phosphoglycerate. Residue glutamate 209 is the Proton donor of the active site. Mg(2+) is bound by residues aspartate 246, glutamate 289, and aspartate 316. Residues lysine 341, arginine 370, serine 371, and lysine 392 each coordinate (2R)-2-phosphoglycerate. The active-site Proton acceptor is lysine 341.

It belongs to the enolase family. In terms of assembly, component of the RNA degradosome, a multiprotein complex involved in RNA processing and mRNA degradation. Requires Mg(2+) as cofactor.

It localises to the cytoplasm. Its subcellular location is the secreted. The protein localises to the cell surface. The enzyme catalyses (2R)-2-phosphoglycerate = phosphoenolpyruvate + H2O. It participates in carbohydrate degradation; glycolysis; pyruvate from D-glyceraldehyde 3-phosphate: step 4/5. Catalyzes the reversible conversion of 2-phosphoglycerate (2-PG) into phosphoenolpyruvate (PEP). It is essential for the degradation of carbohydrates via glycolysis. The sequence is that of Enolase from Shewanella baltica (strain OS223).